We begin with the raw amino-acid sequence, 435 residues long: Adenylosuccinate synthetase (435 aa).

GTP contacts are provided by residues 17 to 23 (GDEGKGK) and 47 to 49 (GHT). Residue Asp18 is the Proton acceptor of the active site. Residues Asp18 and Gly47 each coordinate Mg(2+). IMP is bound by residues 18–21 (DEGK), 45–48 (NAGH), Thr138, Arg152, Asn232, Thr247, and Arg311. Residue His48 is the Proton donor of the active site. 307–313 (VTTGRKR) provides a ligand contact to substrate. GTP-binding positions include Arg313, 339–341 (KLD), and 421–423 (GVG).

This sequence belongs to the adenylosuccinate synthetase family. Homodimer. Requires Mg(2+) as cofactor.

It localises to the cytoplasm. The enzyme catalyses IMP + L-aspartate + GTP = N(6)-(1,2-dicarboxyethyl)-AMP + GDP + phosphate + 2 H(+). The protein operates within purine metabolism; AMP biosynthesis via de novo pathway; AMP from IMP: step 1/2. Its function is as follows. Plays an important role in the de novo pathway and in the salvage pathway of purine nucleotide biosynthesis. Catalyzes the first committed step in the biosynthesis of AMP from IMP. This is Adenylosuccinate synthetase from Caenorhabditis briggsae.